The primary structure comprises 702 residues: 1,4-alpha-glucan-branching enzyme (702 aa).

A2 is subject to N-acetylalanine. Substrate is bound by residues 62 to 63 (NE) and 91 to 93 (WAP). Residue W107 coordinates (1,4-alpha-D-glucosyl)n. 118 to 121 (DYGK) is a substrate binding site. A (1,4-alpha-D-glucosyl)n-binding site is contributed by K143. At Y173 the chain carries Phosphotyrosine. 333-336 (EILR) serves as a coordination point for substrate. The active-site Nucleophile is D357. E412 acts as the Proton donor in catalysis.

This sequence belongs to the glycosyl hydrolase 13 family. GlgB subfamily. Monomer.

It carries out the reaction Transfers a segment of a (1-&gt;4)-alpha-D-glucan chain to a primary hydroxy group in a similar glucan chain.. The protein operates within glycan biosynthesis; glycogen biosynthesis. Functionally, glycogen-branching enzyme participates in the glycogen biosynthetic process along with glycogenin and glycogen synthase. Generates alpha-1,6-glucosidic branches from alpha-1,4-linked glucose chains, to increase solubility of the glycogen polymer. The sequence is that of 1,4-alpha-glucan-branching enzyme (GBE1) from Homo sapiens (Human).